We begin with the raw amino-acid sequence, 167 residues long: Novel acetylcholine receptor chaperone (167 aa).

Topologically, residues 1-5 (MASPR) are cytoplasmic. The chain crosses the membrane as a helical span at residues 6 to 26 (TVTIVALSVALGLFFVFMGTI). Topologically, residues 27 to 61 (KLTPRLSKDAYSEMKRAYKSYVRALPLLKKMGINS) are lumenal. An interaction with NGFR region spans residues 43 to 54 (AYKSYVRALPLL). The chain crosses the membrane as a helical span at residues 62-82 (ILLRKSIGALEVACGIVMTLV). The Cytoplasmic segment spans residues 83–88 (PGRPKD). Residues 89 to 109 (VANFFLLLLVLAVLFFHQLVG) traverse the membrane as a helical segment. At 110-114 (DPLKR) the chain is on the lumenal side. Residues 115-132 (YAHALVFGILLTCRLLIA) traverse the membrane as a helical segment. At 133 to 167 (RKPEDRSSEKKPLPGNAEEQPSLYEKAPQGKVKVS) the chain is on the cytoplasmic side. Residues 136 to 167 (EDRSSEKKPLPGNAEEQPSLYEKAPQGKVKVS) are disordered.

The protein belongs to the DoxX family. May interact with NGFR. Interacts with RPN1, RPN2 and CANX.

It is found in the peroxisome membrane. Its subcellular location is the cytoplasmic vesicle. The protein resides in the endoplasmic reticulum membrane. In terms of biological role, molecular chaperone which mediates the proper assembly and functional expression of the nicotinic acetylcholine receptors (nAChRs) throughout the brain. Essential for the proper folding, assembly, function and surface trafficking of alpha-7 (CHRNA7), alpha-4-beta-2, alpha-3-beta-2 and alpha-3-beta-4 receptors. Stably associates with ribophorin-1 (RPN1) and ribophorin-2 (RPN2) (components of the oligosaccharyl transferase (OST) complex) and with calnexin (CANX), both of which are critical for NACHO-mediated effects on CHRNA7 assembly and function. Facilitates the proper folding and assembly of alpha-6-beta-2 and alpha-6-beta-2-beta-3 receptors and acts at early stages of the nAChRs subunit assembly. Promotes the expression of the alpha-4(2):beta-2(3) stoichiometric form over the alpha-4(3):beta-2(2) form. This Macaca fascicularis (Crab-eating macaque) protein is Novel acetylcholine receptor chaperone (TMEM35A).